Here is a 218-residue protein sequence, read N- to C-terminus: Protein GrpE (218 aa).

A disordered region spans residues 1-78 (MSEFNKDDYL…DSADTLTPLG (78 aa)). The span at 14 to 58 (PDPSDAEAAAQASSGADASAESGSAQDSAAQAPSNEGADAAPAAA) shows a compositional bias: low complexity.

The protein belongs to the GrpE family. As to quaternary structure, homodimer.

The protein localises to the cytoplasm. In terms of biological role, participates actively in the response to hyperosmotic and heat shock by preventing the aggregation of stress-denatured proteins, in association with DnaK and GrpE. It is the nucleotide exchange factor for DnaK and may function as a thermosensor. Unfolded proteins bind initially to DnaJ; upon interaction with the DnaJ-bound protein, DnaK hydrolyzes its bound ATP, resulting in the formation of a stable complex. GrpE releases ADP from DnaK; ATP binding to DnaK triggers the release of the substrate protein, thus completing the reaction cycle. Several rounds of ATP-dependent interactions between DnaJ, DnaK and GrpE are required for fully efficient folding. This is Protein GrpE from Bifidobacterium longum (strain NCC 2705).